A 447-amino-acid polypeptide reads, in one-letter code: Glutamyl-tRNA(Gln) amidotransferase subunit A (447 aa).

Residues K51 and S126 each act as charge relay system in the active site. S150 (acyl-ester intermediate) is an active-site residue.

This sequence belongs to the amidase family. GatA subfamily. In terms of assembly, heterotrimer of A, B and C subunits.

It catalyses the reaction L-glutamyl-tRNA(Gln) + L-glutamine + ATP + H2O = L-glutaminyl-tRNA(Gln) + L-glutamate + ADP + phosphate + H(+). Its function is as follows. Allows the formation of correctly charged Gln-tRNA(Gln) through the transamidation of misacylated Glu-tRNA(Gln) in organisms which lack glutaminyl-tRNA synthetase. The reaction takes place in the presence of glutamine and ATP through an activated gamma-phospho-Glu-tRNA(Gln). This is Glutamyl-tRNA(Gln) amidotransferase subunit A from Helicobacter hepaticus (strain ATCC 51449 / 3B1).